Here is a 459-residue protein sequence, read N- to C-terminus: Disease resistance protein CHL1 (459 aa).

The 155-residue stretch at 16–170 (REVDVFLSFC…QIARDISLVV (155 aa)) folds into the TIR domain. Glu89 is an active-site residue. In terms of domain architecture, NB-ARC spans 191 to 401 (VYDLLALEVN…LLKLKAKQGG (211 aa)). Residues 429-440 (ERKESSQDKSQQ) show a composition bias toward basic and acidic residues. The interval 429–459 (ERKESSQDKSQQESEVAADILIGKESSQDKQ) is disordered.

As to expression, mostly expressed in leaves, stems and roots, and, to a lower extent, in flowers and siliques.

It is found in the cytoplasm. It carries out the reaction NAD(+) + H2O = ADP-D-ribose + nicotinamide + H(+). Its function is as follows. Confers resistance to low temperatures by limiting chloroplast damage and cell death, thus maintaining growth homeostasis. The polypeptide is Disease resistance protein CHL1 (Arabidopsis thaliana (Mouse-ear cress)).